We begin with the raw amino-acid sequence, 354 residues long: MRVTDFSFELPESLIAHYPQPERSRCRLLSLEGPTGALTHGTFTDLLDKLNPGDLLVFNNTRVIPARLFGRKASGGKIEVLVERMLDDKRILAHIRASKAPKPGTELLLGDDESIHATMTARHGALFEVEFNDPRPVLDILNAIGHMPLPPYIDRPDEDADRELYQTVYSEKPGAVAAPTAGLHFDEPLLAALREKGIEMAFVTLHVGAGTFQPVRVDTIEDHIMHSEYAEVPQEVVDAVLAAKARGNRVIAVGTTSVRSLESAAQAAKNDLIEPFFGDTQIFIYPGYQYKVIDALITNFHLPESTLIMLVSAFAGYQHTMNAYKTAVEQKYRFFSYGDAMFITYNPQAISERP.

Belongs to the QueA family. In terms of assembly, monomer.

It localises to the cytoplasm. It catalyses the reaction 7-aminomethyl-7-carbaguanosine(34) in tRNA + S-adenosyl-L-methionine = epoxyqueuosine(34) in tRNA + adenine + L-methionine + 2 H(+). The protein operates within tRNA modification; tRNA-queuosine biosynthesis. Functionally, transfers and isomerizes the ribose moiety from AdoMet to the 7-aminomethyl group of 7-deazaguanine (preQ1-tRNA) to give epoxyqueuosine (oQ-tRNA). This is S-adenosylmethionine:tRNA ribosyltransferase-isomerase from Salmonella dublin (strain CT_02021853).